A 494-amino-acid chain; its full sequence is Guanosine-5'-triphosphate,3'-diphosphate pyrophosphatase (494 aa).

The protein belongs to the GppA/Ppx family. GppA subfamily.

The catalysed reaction is guanosine 3'-diphosphate 5'-triphosphate + H2O = guanosine 3',5'-bis(diphosphate) + phosphate + H(+). It participates in purine metabolism; ppGpp biosynthesis; ppGpp from GTP: step 2/2. Functionally, catalyzes the conversion of pppGpp to ppGpp. Guanosine pentaphosphate (pppGpp) is a cytoplasmic signaling molecule which together with ppGpp controls the 'stringent response', an adaptive process that allows bacteria to respond to amino acid starvation, resulting in the coordinated regulation of numerous cellular activities. In Escherichia coli O6:H1 (strain CFT073 / ATCC 700928 / UPEC), this protein is Guanosine-5'-triphosphate,3'-diphosphate pyrophosphatase.